Consider the following 347-residue polypeptide: Ryncolin-2 (347 aa).

A signal peptide spans 1–19 (MKPWAAFHLIFLVASSLEG). Residues 49–115 (LQSQPGIPGI…DKGDKGDKGD (67 aa)) are disordered. Residues 57–114 (GIPGVPGINGSEGLKGDPGPQGLPGETGFDGIPGVAGPKGDKGDQGDKGDKGDKGDKG) enclose the Collagen-like domain. Residues 95-115 (KGDKGDQGDKGDKGDKGDKGD) are compositionally biased toward basic and acidic residues. Residues 121 to 341 (DCPPTDVEVR…YADMKIRPQQ (221 aa)) form the Fibrinogen C-terminal domain. 2 cysteine pairs are disulfide-bonded: cysteine 132–cysteine 160 and cysteine 284–cysteine 297.

This sequence belongs to the ficolin lectin family. Veficolin subfamily. In terms of processing, hydroxylated, possibly at Pro-74 and Pro-94. As to expression, expressed by the venom duct.

It is found in the secreted. Its function is as follows. Initiates complement activation and/or interferes in platelet aggregation and/or blood coagulation. The polypeptide is Ryncolin-2 (Cerberus rynchops (Dog-faced water snake)).